Here is a 231-residue protein sequence, read N- to C-terminus: Small ribosomal subunit protein uS3c (231 aa).

The 85-residue stretch at 39–123 folds into the KH type-2 domain; that stretch reads LRNFIKKKYI…HLRLSVKPLR (85 aa).

It belongs to the universal ribosomal protein uS3 family. As to quaternary structure, part of the 30S ribosomal subunit.

The protein resides in the plastid. It is found in the chloroplast. The chain is Small ribosomal subunit protein uS3c (rps3) from Chlorella vulgaris (Green alga).